A 161-amino-acid chain; its full sequence is uncharacterized protein (161 aa).

This is an uncharacterized protein from Sinorhizobium fredii (strain NBRC 101917 / NGR234).